A 347-amino-acid polypeptide reads, in one-letter code: Tetraacyldisaccharide 4'-kinase (347 aa).

Position 54 to 61 (54 to 61 (TVGGAGKT)) interacts with ATP.

Belongs to the LpxK family.

It catalyses the reaction a lipid A disaccharide + ATP = a lipid IVA + ADP + H(+). Its pathway is glycolipid biosynthesis; lipid IV(A) biosynthesis; lipid IV(A) from (3R)-3-hydroxytetradecanoyl-[acyl-carrier-protein] and UDP-N-acetyl-alpha-D-glucosamine: step 6/6. Its function is as follows. Transfers the gamma-phosphate of ATP to the 4'-position of a tetraacyldisaccharide 1-phosphate intermediate (termed DS-1-P) to form tetraacyldisaccharide 1,4'-bis-phosphate (lipid IVA). In Rhizobium etli (strain CIAT 652), this protein is Tetraacyldisaccharide 4'-kinase.